The chain runs to 344 residues: Transcription factor HRS1 (344 aa).

Residues 88 to 184 (IKDSSTSNEE…DGGGGRKQRR (97 aa)) form a disordered region. Residues 95-104 (NEEEDEEFDD) show a composition bias toward acidic residues. Composition is skewed to basic and acidic residues over residues 105 to 124 (EHGNHDPDNDSEDKNTKSDW) and 138 to 178 (LLPK…DGGG). Positions 178–238 (GGRKQRRCWS…HLQKYRLHTR (61 aa)) constitute an HTH myb-type domain. Residues 209-234 (PKQIREFMKVDGLTNDEVKSHLQKYR) constitute a DNA-binding region (H-T-H motif). Positions 269–291 (STGKTTGGATTSSTTTTTGIYGT) are enriched in low complexity. Residues 269–322 (STGKTTGGATTSSTTTTTGIYGTMAAPPPPQWPSHSNYRPSIIVDEGSGSHSEG) form a disordered region.

As to expression, expressed in the root hair region and root hair cells.

It is found in the nucleus. Transcription factor involved in nitrate and phosphate signaling in roots. Integrates nitrate and phosphate starvation responses and adaptation of root architecture depending on nutrient availabilities. Acts downstream of the nitrate sensor and transporter NPF6.3/NRT1.1. Represses primary root development in response to phosphate deficiency conditions, only when nitrate is present. Involved in the modulation of primary root and root hair growth in phosphate-deprived environment. May be required for suppressing abscisic acid (ABA) signaling in germinating embryo axis, which promotes the timely germination of seeds. The chain is Transcription factor HRS1 from Arabidopsis thaliana (Mouse-ear cress).